Reading from the N-terminus, the 325-residue chain is BTB/POZ domain-containing protein KCTD12 (325 aa).

The disordered stretch occupies residues 1–28 (MALADSTRGLPNGGGGGGGSGSSSSSAE). The residue at position 2 (Ala-2) is an N-acetylalanine. The span at 11–21 (PNGGGGGGGSG) shows a compositional bias: gly residues. Tyr-119 is subject to Phosphotyrosine. The tract at residues 129-202 (LGAPQQPGPG…PLLTPSQSLD (74 aa)) is disordered. Ser-151, Ser-171, and Ser-185 each carry phosphoserine. Position 196 is a phosphothreonine (Thr-196). Position 200 is a phosphoserine (Ser-200).

In terms of assembly, interacts as a tetramer with GABBR1 and GABBR2. As to expression, present in a variety of fetal organs, with highest expression levels in the cochlea and brain and, in stark contrast, is detected only at extremely low levels in adult organs, such as brain and lung.

The protein localises to the presynaptic cell membrane. It is found in the postsynaptic cell membrane. In terms of biological role, auxiliary subunit of GABA-B receptors that determine the pharmacology and kinetics of the receptor response. Increases agonist potency and markedly alter the G-protein signaling of the receptors by accelerating onset and promoting desensitization. In Homo sapiens (Human), this protein is BTB/POZ domain-containing protein KCTD12 (KCTD12).